The sequence spans 1184 residues: C5a peptidase (1184 aa).

The first 31 residues, 1-31 (MRKKQKLPFDKLAIALMSTSILLNAQSDIKA), serve as a signal peptide directing secretion. Composition is skewed to polar residues over residues 33-52 (TVTEDTPATEQAVETPQPTA) and 89-100 (AKTTDTPATSKA). The tract at residues 33–117 (TVTEDTPATE…PSQVKTLQEK (85 aa)) is disordered. In terms of domain architecture, Peptidase S8 spans 99 to 581 (KATIRDLNDP…AGAVDAKKAS (483 aa)). Residues Asp-130, His-193, and Ser-512 each act as charge relay system in the active site. Basic and acidic residues-rich tracts occupy residues 1029-1054 (EGHSNKPEQDGSDQVPDKKPETKPEQ), 1061-1071 (PDKKPETKPEQ), 1078-1088 (PDKKPEAKPEQ), and 1095-1107 (PDKKPETKPEKDS). Residues 1029 to 1150 (EGHSNKPEQD…RDQLPTTNDK (122 aa)) are disordered. Repeat copies occupy residues 1034-1067 (KPEQDGSDQVPDKKPETKPEQDGSGQAPDKKPET), 1068-1084 (KPEQDGSGQAPDKKPEA), 1085-1101 (KPEQDGSGQTPDKKPET), and 1102-1118 (KPEKDSSGQTPGKTPQK). The 4 X 17 AA tandem repeats stretch occupies residues 1034 to 1118 (KPEQDGSDQV…GQTPGKTPQK (85 aa)). The span at 1109–1123 (GQTPGKTPQKGQPSR) shows a compositional bias: polar residues. The short motif at 1144–1148 (LPTTN) is the LPXTG sorting signal element. Thr-1147 carries the post-translational modification Pentaglycyl murein peptidoglycan amidated threonine. Residues 1148–1184 (NDKDTNRLHLLKLVMTTFFFGLVAHIFKTKRQKETKK) constitute a propeptide, removed by sortase.

It belongs to the peptidase S8 family. Post-translationally, cleaved by SpeB protease; leading to its degradation. Degradation by SpeB is probably strictly regulated to preserve integrity of C5a peptidase.

It localises to the secreted. It is found in the cell wall. It carries out the reaction The primary cleavage site is at 67-His-|-Lys-68 in human C5a with a minor secondary cleavage site at 58-Ala-|-Ser-59.. This virulence factor of S.pyogenes specifically cleaves the human serum chemotaxin C5a at '68-Lys-|-Asp-69' bond near its C-terminus, destroying its ability to serve as a chemoattractant. This is C5a peptidase (scpA) from Streptococcus pyogenes serotype M6 (strain ATCC BAA-946 / MGAS10394).